A 188-amino-acid polypeptide reads, in one-letter code: Small ribosomal subunit protein uS12m (188 aa).

Residues 1 to 63 (MSGGRWISNL…AAFRLPQSSG (63 aa)) constitute a mitochondrion transit peptide.

The protein belongs to the universal ribosomal protein uS12 family.

The protein localises to the mitochondrion. In terms of biological role, protein S12 is involved in the translation initiation step. The polypeptide is Small ribosomal subunit protein uS12m (RPS12) (Oenothera elata subsp. hookeri (Hooker's evening primrose)).